Consider the following 343-residue polypeptide: Small ribosomal subunit biogenesis GTPase RsgA (343 aa).

A disordered region spans residues M1–K32. Basic and acidic residues predominate over residues R9 to Q20. The CP-type G domain occupies Y109–F273. GTP contacts are provided by residues N156 to D159 and G215 to S223. Zn(2+) contacts are provided by C297, C302, H304, and C310.

This sequence belongs to the TRAFAC class YlqF/YawG GTPase family. RsgA subfamily. In terms of assembly, monomer. Associates with 30S ribosomal subunit, binds 16S rRNA. Requires Zn(2+) as cofactor.

The protein localises to the cytoplasm. One of several proteins that assist in the late maturation steps of the functional core of the 30S ribosomal subunit. Helps release RbfA from mature subunits. May play a role in the assembly of ribosomal proteins into the subunit. Circularly permuted GTPase that catalyzes slow GTP hydrolysis, GTPase activity is stimulated by the 30S ribosomal subunit. This chain is Small ribosomal subunit biogenesis GTPase RsgA, found in Saccharophagus degradans (strain 2-40 / ATCC 43961 / DSM 17024).